We begin with the raw amino-acid sequence, 364 residues long: Aminomethyltransferase (364 aa).

It belongs to the GcvT family. In terms of assembly, the glycine cleavage system is composed of four proteins: P, T, L and H.

It catalyses the reaction N(6)-[(R)-S(8)-aminomethyldihydrolipoyl]-L-lysyl-[protein] + (6S)-5,6,7,8-tetrahydrofolate = N(6)-[(R)-dihydrolipoyl]-L-lysyl-[protein] + (6R)-5,10-methylene-5,6,7,8-tetrahydrofolate + NH4(+). Functionally, the glycine cleavage system catalyzes the degradation of glycine. This chain is Aminomethyltransferase, found in Thermotoga petrophila (strain ATCC BAA-488 / DSM 13995 / JCM 10881 / RKU-1).